Here is a 252-residue protein sequence, read N- to C-terminus: Uridylate kinase (252 aa).

23–26 contributes to the ATP binding site; sequence KLSG. Position 65 (G65) interacts with UMP. ATP is bound by residues G66 and R70. UMP contacts are provided by residues D85 and 146 to 153; that span reads LGAPFFST. Residues T173, Q174, Y179, and D182 each contribute to the ATP site.

It belongs to the UMP kinase family. As to quaternary structure, homohexamer.

The protein resides in the cytoplasm. It carries out the reaction UMP + ATP = UDP + ADP. The protein operates within pyrimidine metabolism; CTP biosynthesis via de novo pathway; UDP from UMP (UMPK route): step 1/1. Its activity is regulated as follows. Inhibited by UTP. Its function is as follows. Catalyzes the reversible phosphorylation of UMP to UDP. The chain is Uridylate kinase from Thermobifida fusca (strain YX).